The following is a 625-amino-acid chain: Isocitrate dehydrogenase kinase/phosphatase (625 aa).

ATP is bound by residues 325–331 and Lys346; that span reads APGIKGM. Residue Asp381 is part of the active site. Residues 596 to 625 form a disordered region; the sequence is RRHSPGRNDHELLTHLPPEPMLTGLSGMTP.

It belongs to the AceK family.

Its subcellular location is the cytoplasm. It catalyses the reaction L-seryl-[isocitrate dehydrogenase] + ATP = O-phospho-L-seryl-[isocitrate dehydrogenase] + ADP + H(+). Functionally, bifunctional enzyme which can phosphorylate or dephosphorylate isocitrate dehydrogenase (IDH) on a specific serine residue. This is a regulatory mechanism which enables bacteria to bypass the Krebs cycle via the glyoxylate shunt in response to the source of carbon. When bacteria are grown on glucose, IDH is fully active and unphosphorylated, but when grown on acetate or ethanol, the activity of IDH declines drastically concomitant with its phosphorylation. The polypeptide is Isocitrate dehydrogenase kinase/phosphatase (Polaromonas sp. (strain JS666 / ATCC BAA-500)).